A 110-amino-acid polypeptide reads, in one-letter code: Nucleoid-associated protein RALTA_A1934 (110 aa).

Positions Thr88–Ser98 are enriched in polar residues. Positions Thr88 to Phe110 are disordered. Pro residues predominate over residues Pro101–Phe110.

It belongs to the YbaB/EbfC family. Homodimer.

It localises to the cytoplasm. Its subcellular location is the nucleoid. In terms of biological role, binds to DNA and alters its conformation. May be involved in regulation of gene expression, nucleoid organization and DNA protection. This is Nucleoid-associated protein RALTA_A1934 from Cupriavidus taiwanensis (strain DSM 17343 / BCRC 17206 / CCUG 44338 / CIP 107171 / LMG 19424 / R1) (Ralstonia taiwanensis (strain LMG 19424)).